The chain runs to 327 residues: Phenylalanine--tRNA ligase alpha subunit (327 aa).

E252 lines the Mg(2+) pocket.

The protein belongs to the class-II aminoacyl-tRNA synthetase family. Phe-tRNA synthetase alpha subunit type 1 subfamily. In terms of assembly, tetramer of two alpha and two beta subunits. It depends on Mg(2+) as a cofactor.

It is found in the cytoplasm. The enzyme catalyses tRNA(Phe) + L-phenylalanine + ATP = L-phenylalanyl-tRNA(Phe) + AMP + diphosphate + H(+). The sequence is that of Phenylalanine--tRNA ligase alpha subunit from Shewanella denitrificans (strain OS217 / ATCC BAA-1090 / DSM 15013).